The primary structure comprises 392 residues: Aminomethyltransferase, mitochondrial (392 aa).

A mitochondrion-targeting transit peptide spans 1–16; sequence MLRAGCRAALARRHLS. Substrate contacts are provided by glutamate 221, arginine 250, and tyrosine 388.

This sequence belongs to the GcvT family. The glycine cleavage system is composed of four proteins: P, T, L and H.

It localises to the mitochondrion. The catalysed reaction is N(6)-[(R)-S(8)-aminomethyldihydrolipoyl]-L-lysyl-[protein] + (6S)-5,6,7,8-tetrahydrofolate = N(6)-[(R)-dihydrolipoyl]-L-lysyl-[protein] + (6R)-5,10-methylene-5,6,7,8-tetrahydrofolate + NH4(+). Functionally, the glycine cleavage system catalyzes the degradation of glycine. The protein is Aminomethyltransferase, mitochondrial of Gallus gallus (Chicken).